Reading from the N-terminus, the 264-residue chain is NADH-quinone oxidoreductase subunit B 1 (264 aa).

[4Fe-4S] cluster is bound by residues Cys42, Cys43, Cys108, and Cys138.

It belongs to the complex I 20 kDa subunit family. In terms of assembly, NDH-1 is composed of 14 different subunits. Subunits NuoB, C, D, E, F, and G constitute the peripheral sector of the complex. [4Fe-4S] cluster serves as cofactor.

It is found in the cell membrane. It catalyses the reaction a quinone + NADH + 5 H(+)(in) = a quinol + NAD(+) + 4 H(+)(out). NDH-1 shuttles electrons from NADH, via FMN and iron-sulfur (Fe-S) centers, to quinones in the respiratory chain. The immediate electron acceptor for the enzyme in this species is believed to be ubiquinone. Couples the redox reaction to proton translocation (for every two electrons transferred, four hydrogen ions are translocated across the cytoplasmic membrane), and thus conserves the redox energy in a proton gradient. The sequence is that of NADH-quinone oxidoreductase subunit B 1 from Chloroflexus aurantiacus (strain ATCC 29366 / DSM 635 / J-10-fl).